The chain runs to 240 residues: 1-(5-phosphoribosyl)-5-[(5-phosphoribosylamino)methylideneamino] imidazole-4-carboxamide isomerase 2 (240 aa).

Aspartate 8 serves as the catalytic Proton acceptor. The Proton donor role is filled by aspartate 129.

This sequence belongs to the HisA/HisF family.

Its subcellular location is the cytoplasm. It carries out the reaction 1-(5-phospho-beta-D-ribosyl)-5-[(5-phospho-beta-D-ribosylamino)methylideneamino]imidazole-4-carboxamide = 5-[(5-phospho-1-deoxy-D-ribulos-1-ylimino)methylamino]-1-(5-phospho-beta-D-ribosyl)imidazole-4-carboxamide. Its pathway is amino-acid biosynthesis; L-histidine biosynthesis; L-histidine from 5-phospho-alpha-D-ribose 1-diphosphate: step 4/9. The sequence is that of 1-(5-phosphoribosyl)-5-[(5-phosphoribosylamino)methylideneamino] imidazole-4-carboxamide isomerase 2 from Ruegeria sp. (strain TM1040) (Silicibacter sp.).